A 168-amino-acid chain; its full sequence is Endoribonuclease YbeY (168 aa).

The Zn(2+) site is built by H128, H132, and H138.

Belongs to the endoribonuclease YbeY family. Zn(2+) is required as a cofactor.

It is found in the cytoplasm. Single strand-specific metallo-endoribonuclease involved in late-stage 70S ribosome quality control and in maturation of the 3' terminus of the 16S rRNA. The sequence is that of Endoribonuclease YbeY from Sphingopyxis alaskensis (strain DSM 13593 / LMG 18877 / RB2256) (Sphingomonas alaskensis).